Here is a 323-residue protein sequence, read N- to C-terminus: MAASARGSGRAPTRRLLVLLLLPLLWAPAGVRAGPEEDLSHRNQEPPAPAQQLQPQPAAVQGLEPARAEKGFTPAAPVHTNREDAATQANLGFIHAFVAAISVIIVSELGDKTFFIAAIMAMRYNRLTVLAGAMLALALMTCLSVLFGYATTVIPRVYTYYVSTALFAIFGIRMLREGLKMSPDEGQEELEEVQAELKKKDEEFQRTKLLNGPDVETGTSTAIPQKKWLHFISPIFVQALTLTFLAEWGDRSQLTTIVLAAREDPYGVAVGGTVGHCLCTGLAVIGGRMIAQKISVRTVTIIGGIVFLAFAFSALFISPESGF.

An N-terminal signal peptide occupies residues 1-33 (MAASARGSGRAPTRRLLVLLLLPLLWAPAGVRA). At 34-88 (GPEEDLSHRNQEPPAPAQQLQPQPAAVQGLEPARAEKGFTPAAPVHTNREDAATQ) the chain is on the lumenal side. A compositionally biased stretch (basic and acidic residues) spans 35–44 (PEEDLSHRNQ). Residues 35–60 (PEEDLSHRNQEPPAPAQQLQPQPAAV) form a disordered region. Positions 50-59 (AQQLQPQPAA) are enriched in low complexity. The chain crosses the membrane as a helical span at residues 89 to 109 (ANLGFIHAFVAAISVIIVSEL). Over 110–126 (GDKTFFIAAIMAMRYNR) the chain is Cytoplasmic. A helical transmembrane segment spans residues 127–147 (LTVLAGAMLALALMTCLSVLF). The Lumenal segment spans residues 148–151 (GYAT). Residues 152-172 (TVIPRVYTYYVSTALFAIFGI) traverse the membrane as a helical segment. The Cytoplasmic portion of the chain corresponds to 173-227 (RMLREGLKMSPDEGQEELEEVQAELKKKDEEFQRTKLLNGPDVETGTSTAIPQKK). A coiled-coil region spans residues 184–211 (DEGQEELEEVQAELKKKDEEFQRTKLLN). The helical transmembrane segment at 228 to 248 (WLHFISPIFVQALTLTFLAEW) threads the bilayer. The Lumenal portion of the chain corresponds to 249 to 266 (GDRSQLTTIVLAAREDPY). The helical transmembrane segment at 267–287 (GVAVGGTVGHCLCTGLAVIGG) threads the bilayer. The Cytoplasmic segment spans residues 288–298 (RMIAQKISVRT). The helical transmembrane segment at 299-319 (VTIIGGIVFLAFAFSALFISP) threads the bilayer. Topologically, residues 320-323 (ESGF) are lumenal.

This sequence belongs to the GDT1 family.

It is found in the golgi apparatus membrane. It carries out the reaction Ca(2+)(in) + n H(+)(out) = Ca(2+)(out) + n H(+)(in). It catalyses the reaction Mn(2+)(in) + n H(+)(out) = Mn(2+)(out) + n H(+)(in). Putative divalent cation:proton antiporter that exchanges calcium or manganese ions for protons across the Golgi membrane. Mediates the reversible transport of calcium or manganese to the Golgi lumen driven by the proton gradient and possibly the membrane potential generated by V-ATPase. Provides calcium or manganese cofactors to resident Golgi enzymes and contributes to the maintenance of an acidic luminal Golgi pH required for proper functioning of the secretory pathway. Promotes Ca(2+) storage within the Golgi lumen of the mammary epithelial cells to be then secreted into milk. The transport mechanism and stoichiometry remains to be elucidated. This chain is Putative divalent cation/proton antiporter TMEM165, found in Rattus norvegicus (Rat).